The sequence spans 1387 residues: DNA-directed RNA polymerase subunit beta'' (1387 aa).

The Zn(2+) site is built by cysteine 224, cysteine 295, cysteine 302, and cysteine 305. The interval 883-903 (SHTGKRNDPAGSGLIPDNGSD) is disordered.

It belongs to the RNA polymerase beta' chain family. RpoC2 subfamily. In terms of assembly, in plastids the minimal PEP RNA polymerase catalytic core is composed of four subunits: alpha, beta, beta', and beta''. When a (nuclear-encoded) sigma factor is associated with the core the holoenzyme is formed, which can initiate transcription. It depends on Zn(2+) as a cofactor.

The protein localises to the plastid. The protein resides in the chloroplast. It catalyses the reaction RNA(n) + a ribonucleoside 5'-triphosphate = RNA(n+1) + diphosphate. DNA-dependent RNA polymerase catalyzes the transcription of DNA into RNA using the four ribonucleoside triphosphates as substrates. The sequence is that of DNA-directed RNA polymerase subunit beta'' from Platanus occidentalis (Sycamore).